Here is a 239-residue protein sequence, read N- to C-terminus: NAD-dependent protein deacylase (239 aa).

The 234-residue stretch at 1–234 (MENLNIVTLT…KKVYDYLREK (234 aa)) folds into the Deacetylase sirtuin-type domain. NAD(+) is bound by residues 11-30 (GAGISAESGIPTFRGKDGLW) and 89-92 (QNVD). The active-site Proton acceptor is the histidine 107. The Zn(2+) site is built by cysteine 115, cysteine 118, cysteine 136, and cysteine 139. NAD(+) contacts are provided by residues 176–178 (GTS), 202–204 (NPE), and alanine 220.

This sequence belongs to the sirtuin family. Class III subfamily. The cofactor is Zn(2+).

It localises to the cytoplasm. It catalyses the reaction N(6)-acetyl-L-lysyl-[protein] + NAD(+) + H2O = 2''-O-acetyl-ADP-D-ribose + nicotinamide + L-lysyl-[protein]. Its function is as follows. NAD-dependent protein deacetylase which modulates the activities of several proteins which are inactive in their acetylated form. The polypeptide is NAD-dependent protein deacylase (Aquifex aeolicus (strain VF5)).